Reading from the N-terminus, the 120-residue chain is UPF0231 protein ETA_08290 (120 aa).

It belongs to the UPF0231 family.

This Erwinia tasmaniensis (strain DSM 17950 / CFBP 7177 / CIP 109463 / NCPPB 4357 / Et1/99) protein is UPF0231 protein ETA_08290.